Reading from the N-terminus, the 503-residue chain is Dentin matrix acidic phosphoprotein 1 (503 aa).

A signal peptide spans 1–16 (MKTVILLVFLWGLSCA). Basic and acidic residues predominate over residues 23 to 35 (HNTESESSEERTG). The disordered stretch occupies residues 23–503 (HNTESESSEE…QDDNDCQDGY (481 aa)). The segment covering 54–63 (QASPEGQANS) has biased composition (polar residues). Over residues 98–119 (KEDDEDDSGDDTFGDEDNDLGP) the composition is skewed to acidic residues. Low complexity predominate over residues 138–150 (DTTQSSEDSTSQE). The span at 158–175 (SDSKDHDSEDEADSRPEA) shows a compositional bias: basic and acidic residues. Residues 203–215 (SEFDDEGMQSDDP) show a composition bias toward acidic residues. Basic and acidic residues-rich tracts occupy residues 233 to 243 (RSEESKGDHEP), 267 to 286 (HVSE…RETQ), and 293 to 303 (TASKEESRSES). Low complexity predominate over residues 332-348 (EPSQESSSESQEGVTSE). A Cell attachment site motif is present at residues 350–352 (RGD). N-linked (GlcNAc...) asparagine glycosylation occurs at Asn-356. Over residues 362–373 (DQEDSESSEEDS) the composition is skewed to acidic residues. N-linked (GlcNAc...) asparagine glycosylation is present at Asn-394. Residues 407 to 418 (AQDGDSSSQEGL) are compositionally biased toward polar residues. A compositionally biased stretch (low complexity) spans 419–435 (QSQSASTESRSQESQSE). Asn-457 is a glycosylation site (N-linked (GlcNAc...) asparagine). The segment covering 467–492 (EDIRPKNMEADSRKLIVDAYHNKPIG) has biased composition (basic and acidic residues). Positions 493 to 503 (DQDDNDCQDGY) are enriched in acidic residues.

In terms of assembly, interacts with importin alpha. Post-translationally, phosphorylated in the cytosol and extracellular matrix and unphosphorylated in the nucleus. Phosphorylation is necessary for nucleocytoplasmic transport and may be catalyzed by a nuclear isoform of CK2 and can be augmented by calcium. Phosphorylated (in vitro) by FAM20C in the extracellular medium at sites within the S-x-E/pS motif. Expressed in tooth particularly in odontoblast, ameloblast and cementoblast. Also expressed in bone particularly in osteoblast.

The protein resides in the nucleus. It is found in the cytoplasm. It localises to the secreted. Its subcellular location is the extracellular space. The protein localises to the extracellular matrix. May have a dual function during osteoblast differentiation. In the nucleus of undifferentiated osteoblasts, unphosphorylated form acts as a transcriptional component for activation of osteoblast-specific genes like osteocalcin. During the osteoblast to osteocyte transition phase it is phosphorylated and exported into the extracellular matrix, where it regulates nucleation of hydroxyapatite. The polypeptide is Dentin matrix acidic phosphoprotein 1 (Mus musculus (Mouse)).